The sequence spans 625 residues: MPSDLAKKKAAKKKEAAKARQRPRKGHEENGDAITEPQVAEERNEEANGRETTEVDLLTKELEDFEMKKAAARAVTGVLASHPNSTDAHIINLSLTFHGQELLSDTKLELNSGRRYGLIGLNGIGKSMLLSAIGKREVPIPEHIDIYHLTREMPPSDKTPLQCVMEVDTERAMLEREAERLAHEDAECEKLLELYERLEELDADKAEMRASRILHGLGFTPAMQRKKLKDFSGGWRMRVALARALFIRPFMLLLDEPTNHLDLDACVWLEEELKTFKRILVLVSHSQDFLNGVCTNIIHMHNKKLKYYTGNYDQYVKTRLELEENQMKRFHWEQDQIAHMKNYIARFGHGSAKLARQAQSKEKTLQKMMASGLTERVVSDKTLSFYFPPCGKIPPPVIMVQNVSFKYTKDGPCIYNNLEFGIDLDTRVALVGPNGAGKSTLLKLLTGELLPTDGMIRKHSHVKIGRYHQHLQEQLDLDLSPLEYMMKCYPEIKEKEEMRKIIGRYGLTGKQQVSPIRNLSDGQKCRVCLAWLAWQNPHMLFLDEPTNHLDIETIDALADAINDFEGGMMLVSHDFRLIQQVAQEIWVCEKQTITKWPGDILAYKEHLKSKLVGEEPQPTRRTHNV.

The tract at residues 1–54 is disordered; the sequence is MPSDLAKKKAAKKKEAAKARQRPRKGHEENGDAITEPQVAEERNEEANGRETTE. Over residues 40–54 the composition is skewed to basic and acidic residues; it reads AEERNEEANGRETTE. 2 ABC transporter domains span residues 88 to 327 and 398 to 615; these read AHII…ENQM and IMVQ…VGEE. Residue 120–127 coordinates ATP; it reads GLNGIGKS. T220 is modified (phosphothreonine). K306 is modified (N6-acetyllysine). 432–439 provides a ligand contact to ATP; sequence GPNGAGKS. S514 carries the phosphoserine modification.

The protein belongs to the ABC transporter superfamily. ABCF family. EF3 subfamily.

The sequence is that of ATP-binding cassette sub-family F member 2 (ABCF2) from Bos taurus (Bovine).